The following is a 280-amino-acid chain: Hydrolase MT0498 (280 aa).

In terms of domain architecture, CN hydrolase spans 1-251; that stretch reads MRIALAQIRS…PQLLVADIDV (251 aa). Glu-40 functions as the Proton acceptor in the catalytic mechanism. The active-site Proton donor is the Lys-110. Cys-146 functions as the Nucleophile in the catalytic mechanism.

The protein belongs to the carbon-nitrogen hydrolase superfamily. NIT1/NIT2 family.

In Mycobacterium tuberculosis (strain CDC 1551 / Oshkosh), this protein is Hydrolase MT0498.